The primary structure comprises 151 residues: Protein A151R (151 aa).

Residues histidine 102, cysteine 109, cysteine 132, and cysteine 135 each contribute to the Zn(2+) site. The Thioredoxin WCTKC motif signature appears at 131-135 (WCTKC).

The protein belongs to the asfivirus A151R family. As to quaternary structure, monomer. Homodimer. Interacts with protein B119L. Interacts with membrane protein E248R. Requires Zn(2+) as cofactor.

In terms of biological role, may participate in a redox cascade for the formation of disulfide bonds in viral proteins. This is Protein A151R from African swine fever virus (strain Badajoz 1971 Vero-adapted) (Ba71V).